Here is a 212-residue protein sequence, read N- to C-terminus: Riboflavin kinase (212 aa).

An H-T-H motif-like region spans residues 1 to 87; it reads MKKSNLDLLI…HEELSDALYR (87 aa). The tract at residues 88–212 is riboflavin kinase; sequence GIIIGEVVSG…DGDRIRIKTL (125 aa). 97 to 102 contributes to the CDP binding site; that stretch reads GIGEGA. Mg(2+) contacts are provided by T124 and N126. T180 and E188 together coordinate FMN. A CDP-binding site is contributed by 193–196; sequence VNLR.

It belongs to the archaeal riboflavin kinase family. The cofactor is Mg(2+).

It carries out the reaction riboflavin + CTP = CDP + FMN + H(+). The protein operates within cofactor biosynthesis; FMN biosynthesis; FMN from riboflavin (CTP route): step 1/1. Functionally, catalyzes the CTP-dependent phosphorylation of riboflavin (vitamin B2) to form flavin mononucleotide (FMN). This is Riboflavin kinase (ribK) from Pyrococcus furiosus (strain ATCC 43587 / DSM 3638 / JCM 8422 / Vc1).